The following is a 456-amino-acid chain: Phosphomethylpyrimidine synthase (456 aa).

Substrate-binding positions include asparagine 80, methionine 109, tyrosine 139, histidine 175, 195 to 197, 236 to 239, and glutamate 275; these read SRG and DSLR. Zn(2+) is bound at residue histidine 279. Tyrosine 302 serves as a coordination point for substrate. Residue histidine 343 participates in Zn(2+) binding. [4Fe-4S] cluster contacts are provided by cysteine 423, cysteine 426, and cysteine 431.

The protein belongs to the ThiC family. [4Fe-4S] cluster serves as cofactor.

It carries out the reaction 5-amino-1-(5-phospho-beta-D-ribosyl)imidazole + S-adenosyl-L-methionine = 4-amino-2-methyl-5-(phosphooxymethyl)pyrimidine + CO + 5'-deoxyadenosine + formate + L-methionine + 3 H(+). It functions in the pathway cofactor biosynthesis; thiamine diphosphate biosynthesis. In terms of biological role, catalyzes the synthesis of the hydroxymethylpyrimidine phosphate (HMP-P) moiety of thiamine from aminoimidazole ribotide (AIR) in a radical S-adenosyl-L-methionine (SAM)-dependent reaction. In Prochlorococcus marinus (strain MIT 9515), this protein is Phosphomethylpyrimidine synthase.